The sequence spans 73 residues: Sec-independent protein translocase protein TatA (73 aa).

A helical transmembrane segment spans residues 1–21 (MGSFSIWHWLIVLVIVMLVFG). A disordered region spans residues 43-73 (MKEGDDKAAPAKELRDSTTIDVDAKEKTRQQ).

Belongs to the TatA/E family. In terms of assembly, the Tat system comprises two distinct complexes: a TatABC complex, containing multiple copies of TatA, TatB and TatC subunits, and a separate TatA complex, containing only TatA subunits. Substrates initially bind to the TatABC complex, which probably triggers association of the separate TatA complex to form the active translocon.

The protein localises to the cell inner membrane. Part of the twin-arginine translocation (Tat) system that transports large folded proteins containing a characteristic twin-arginine motif in their signal peptide across membranes. TatA could form the protein-conducting channel of the Tat system. The protein is Sec-independent protein translocase protein TatA of Cupriavidus pinatubonensis (strain JMP 134 / LMG 1197) (Cupriavidus necator (strain JMP 134)).